The chain runs to 342 residues: Elongation factor Ts (342 aa).

The interval 79-82 (TDFV) is involved in Mg(2+) ion dislocation from EF-Tu.

It belongs to the EF-Ts family.

Its subcellular location is the cytoplasm. Its function is as follows. Associates with the EF-Tu.GDP complex and induces the exchange of GDP to GTP. It remains bound to the aminoacyl-tRNA.EF-Tu.GTP complex up to the GTP hydrolysis stage on the ribosome. The polypeptide is Elongation factor Ts (Lactococcus lactis subsp. cremoris (strain MG1363)).